The sequence spans 278 residues: HTH-type transcriptional activator RhaS (278 aa).

One can recognise an HTH araC/xylS-type domain in the interval 174 to 272 (NLLLAWLEDH…NWSPRDIRQG (99 aa)). 2 DNA-binding regions (H-T-H motif) span residues 191–212 (DAVA…KQQT) and 239–262 (VTDI…RREF).

Binds DNA as a dimer.

The protein resides in the cytoplasm. Activates expression of the rhaBAD and rhaT operons. In Shigella dysenteriae serotype 1 (strain Sd197), this protein is HTH-type transcriptional activator RhaS.